The sequence spans 511 residues: Cytochrome P450 705A5 (511 aa).

Residues Cys12 to Phe30 form a helical membrane-spanning segment. Cys454 serves as a coordination point for heme.

Belongs to the cytochrome P450 family. It depends on heme as a cofactor. In terms of tissue distribution, expressed primarily in the root epidermis.

It localises to the membrane. Converts thalian-diol to a desaturated thalian-diol. This is Cytochrome P450 705A5 (CYP705A5) from Arabidopsis thaliana (Mouse-ear cress).